The sequence spans 332 residues: Ferredoxin--NADP reductase 1 (332 aa).

Residues D35, K43, F48, V88, F123, D284, and T325 each coordinate FAD.

This sequence belongs to the ferredoxin--NADP reductase type 2 family. In terms of assembly, homodimer. Requires FAD as cofactor.

It catalyses the reaction 2 reduced [2Fe-2S]-[ferredoxin] + NADP(+) + H(+) = 2 oxidized [2Fe-2S]-[ferredoxin] + NADPH. The sequence is that of Ferredoxin--NADP reductase 1 from Listeria innocua serovar 6a (strain ATCC BAA-680 / CLIP 11262).